The following is a 101-amino-acid chain: MAKLALINREEKRRKLVAQYAKKRAALEAIITNVSLSDEERYEARLKMQALPRNSSPSRLRNRCQLTGRPRGVFRKFGLCRHKIRELAFNGEVPGVVKASW.

Belongs to the universal ribosomal protein uS14 family. As to quaternary structure, part of the 30S ribosomal subunit. Contacts proteins S3 and S10.

Functionally, binds 16S rRNA, required for the assembly of 30S particles and may also be responsible for determining the conformation of the 16S rRNA at the A site. The sequence is that of Small ribosomal subunit protein uS14 from Dechloromonas aromatica (strain RCB).